A 248-amino-acid polypeptide reads, in one-letter code: Ribosomal RNA small subunit methyltransferase G (248 aa).

The interval 1 to 23 (MFHVKHVGPVEPAAGDPEVPPVA) is disordered. S-adenosyl-L-methionine-binding positions include Gly-93, Leu-98, 143–144 (AE), and Arg-161. The interval 226–248 (VVSARRAKPPHPKSARTGKAGTR) is disordered. A compositionally biased stretch (basic residues) spans 230-248 (RRAKPPHPKSARTGKAGTR).

Belongs to the methyltransferase superfamily. RNA methyltransferase RsmG family.

Its subcellular location is the cytoplasm. Functionally, specifically methylates the N7 position of guanine in position 518 of 16S rRNA. The chain is Ribosomal RNA small subunit methyltransferase G from Mycolicibacterium paratuberculosis (strain ATCC BAA-968 / K-10) (Mycobacterium paratuberculosis).